The following is an 850-amino-acid chain: Ras GTPase-activating protein 2 (850 aa).

Positions 1-24 (MAAAAPAAAAASSEAPAASATAEP) are enriched in low complexity. The tract at residues 1–32 (MAAAAPAAAAASSEAPAASATAEPEAGDQDSR) is disordered. Alanine 2 carries the post-translational modification N-acetylalanine. C2 domains follow at residues 20-138 (ATAE…ETWF) and 149-289 (VQGK…QAWY). A Ras-GAP domain is found at 372 to 589 (DKLVPFATAV…IAVKKFLDEI (218 aa)). Serine 555 carries the phosphoserine modification. One can recognise a PH domain in the interval 604 to 706 (VHLKEGEMYK…WIDVLCRVSR (103 aa)). Residues 708 to 744 (NQNRLSFYHPSVYLNGNWLCCQETGENTLGCKPCTAG) form a Btk-type zinc finger. Histidine 716, cysteine 727, cysteine 728, and cysteine 738 together coordinate Zn(2+). The interval 825–850 (HEKYRKKRSSSAKYGSKENPIVGKAS) is disordered.

Its subcellular location is the cytoplasm. It localises to the perinuclear region. In terms of biological role, inhibitory regulator of the Ras-cyclic AMP pathway. Binds inositol tetrakisphosphate (IP4). The sequence is that of Ras GTPase-activating protein 2 (RASA2) from Homo sapiens (Human).